Consider the following 66-residue polypeptide: Toxin Boma6c (66 aa).

One can recognise an LCN-type CS-alpha/beta domain in the interval 2–64 (RDAYIAQNYN…VPIRIPGKCH (63 aa)). Disulfide bonds link Cys-12–Cys-63, Cys-16–Cys-36, Cys-22–Cys-46, and Cys-26–Cys-48.

This sequence belongs to the long (4 C-C) scorpion toxin superfamily. Sodium channel inhibitor family. Alpha subfamily. In terms of tissue distribution, expressed by the venom gland.

Its subcellular location is the secreted. Its function is as follows. Alpha toxins bind voltage-independently at site-3 of sodium channels (Nav) and inhibit the inactivation of the activated channels, thereby blocking neuronal transmission. This chain is Toxin Boma6c, found in Buthus occitanus mardochei (Moroccan scorpion).